The following is a 577-amino-acid chain: DEAD-box ATP-dependent RNA helicase 22 (577 aa).

A Q motif motif is present at residues 82-110 (TSWESLGVSDRLASALHGAGLARPSLVQA). A Helicase ATP-binding domain is found at 113–375 (IPHVLTTNDV…GGVLKRMFPN (263 aa)). 126 to 133 (AETGSGKT) contacts ATP. The DEAD box signature appears at 249-252 (DEAD). Residues 288 to 317 (SLGDTNEYREDSDSQSAELSADDEENEDGL) form a disordered region. Residues 407–568 (LLDAVKYGLK…SFRNKLKKQA (162 aa)) enclose the Helicase C-terminal domain.

It belongs to the DEAD box helicase family.

The catalysed reaction is ATP + H2O = ADP + phosphate + H(+). This is DEAD-box ATP-dependent RNA helicase 22 from Oryza sativa subsp. japonica (Rice).